Consider the following 125-residue polypeptide: Small ribosomal subunit protein eS8 (125 aa).

Positions 1-20 (MLWQGESIRKVTGGRRRPAQ) are disordered.

Belongs to the eukaryotic ribosomal protein eS8 family. In terms of assembly, part of the 30S ribosomal subunit.

The polypeptide is Small ribosomal subunit protein eS8 (Methanoregula boonei (strain DSM 21154 / JCM 14090 / 6A8)).